The primary structure comprises 508 residues: Protein FAM217A (508 aa).

This sequence belongs to the FAM217 family.

In Homo sapiens (Human), this protein is Protein FAM217A (FAM217A).